Reading from the N-terminus, the 314-residue chain is Galectin-12 (314 aa).

Galectin domains lie at 27-161 (YGTT…VGFL) and 190-314 (CSRA…CVHC).

Its subcellular location is the nucleus. Binds lactose. May participate in the apoptosis of adipocytes. The polypeptide is Galectin-12 (Lgals12) (Mus musculus (Mouse)).